The primary structure comprises 292 residues: Galactinol synthase 2 (292 aa).

K65 is a catalytic residue. Mn(2+)-binding residues include D81, D83, and H218.

This sequence belongs to the glycosyltransferase 8 family. Galactosyltransferase subfamily. It depends on a divalent metal cation as a cofactor. In terms of tissue distribution, present in phloem-associated intermediary cells. Weakly expressed in leaves.

Its subcellular location is the cytoplasm. The enzyme catalyses myo-inositol + UDP-alpha-D-galactose = alpha-D-galactosyl-(1-&gt;3)-1D-myo-inositol + UDP + H(+). Its function is as follows. May promote plant stress tolerance. Galactinol synthase mainly involved in the biosynthesis of transport raffinose family oligosaccharides (RFOs) that function as osmoprotectants. The sequence is that of Galactinol synthase 2 (GOLS2) from Ajuga reptans (Bugle).